The chain runs to 297 residues: Probable endonuclease 4 (297 aa).

Zn(2+) contacts are provided by His-69, His-110, Glu-145, Asp-179, His-182, His-214, Asp-227, His-229, and Glu-259.

It belongs to the AP endonuclease 2 family. Requires Zn(2+) as cofactor.

The catalysed reaction is Endonucleolytic cleavage to 5'-phosphooligonucleotide end-products.. Its function is as follows. Endonuclease IV plays a role in DNA repair. It cleaves phosphodiester bonds at apurinic or apyrimidinic (AP) sites, generating a 3'-hydroxyl group and a 5'-terminal sugar phosphate. The protein is Probable endonuclease 4 of Listeria monocytogenes serovar 1/2a (strain ATCC BAA-679 / EGD-e).